Here is a 425-residue protein sequence, read N- to C-terminus: Kynurenine/alpha-aminoadipate aminotransferase, mitochondrial (425 aa).

Residues methionine 1 to alanine 29 constitute a mitochondrion transit peptide. Arginine 20 is a substrate binding site. Lysine 69 is modified (N6-acetyllysine). Substrate contacts are provided by tyrosine 74 and tyrosine 142. The interval tryptophan 178–leucine 208 is disordered. Residue lysine 179 is modified to N6-acetyllysine. Polar residues predominate over residues proline 198–leucine 208. Residue asparagine 202 participates in substrate binding. Lysine 263 bears the N6-(pyridoxal phosphate)lysine; alternate mark. N6-acetyllysine; alternate is present on residues lysine 263 and lysine 339. Residues lysine 263 and lysine 339 each carry the N6-succinyllysine; alternate modification. Arginine 399 is a substrate binding site. Lysine 422 is modified (N6-acetyllysine).

It belongs to the class-I pyridoxal-phosphate-dependent aminotransferase family. As to quaternary structure, homodimer. Requires pyridoxal 5'-phosphate as cofactor.

It localises to the mitochondrion. It catalyses the reaction L-kynurenine + 2-oxoglutarate = kynurenate + L-glutamate + H2O. The catalysed reaction is L-2-aminoadipate + 2-oxoglutarate = 2-oxoadipate + L-glutamate. The enzyme catalyses glycine + 2-oxoglutarate = glyoxylate + L-glutamate. It carries out the reaction L-kynurenine + glyoxylate = kynurenate + glycine + H2O. It catalyses the reaction 3-hydroxy-L-kynurenine + glyoxylate = xanthurenate + glycine + H2O. The catalysed reaction is 2-oxohexanoate + L-kynurenine = L-2-aminohexanoate + kynurenate + H2O. The enzyme catalyses 3-phenylpyruvate + L-kynurenine = kynurenate + L-phenylalanine + H2O. It carries out the reaction 4-methylsulfanyl-2-oxobutanoate + L-kynurenine = kynurenate + L-methionine + H2O. It catalyses the reaction 2-oxo-3-sulfanylpropanoate + L-kynurenine = kynurenate + L-cysteine + H2O. The catalysed reaction is indole-3-pyruvate + L-kynurenine = kynurenate + L-tryptophan + H2O. The enzyme catalyses 2-oxopentanoate + L-kynurenine = L-2-aminopentanoate + kynurenate + H2O. It carries out the reaction 4-methyl-2-oxopentanoate + L-kynurenine = kynurenate + L-leucine + H2O. It catalyses the reaction glyoxylate + L-methionine = 4-methylsulfanyl-2-oxobutanoate + glycine. The catalysed reaction is L-2-aminoadipate + glyoxylate = 2-oxoadipate + glycine. The enzyme catalyses L-tyrosine + glyoxylate = 3-(4-hydroxyphenyl)pyruvate + glycine. It carries out the reaction glyoxylate + L-phenylalanine = 3-phenylpyruvate + glycine. It catalyses the reaction L-tryptophan + glyoxylate = indole-3-pyruvate + glycine. The catalysed reaction is L-leucine + glyoxylate = 4-methyl-2-oxopentanoate + glycine. The enzyme catalyses 2-oxobutanoate + L-kynurenine = (2S)-2-aminobutanoate + kynurenate + H2O. It carries out the reaction 2-oxoadipate + L-kynurenine = L-2-aminoadipate + kynurenate + H2O. It functions in the pathway amino-acid degradation; L-lysine degradation via saccharopine pathway; glutaryl-CoA from L-lysine: step 4/6. Functionally, transaminase with broad substrate specificity. Has transaminase activity towards aminoadipate, kynurenine, methionine and glutamate. Shows activity also towards tryptophan, aspartate and hydroxykynurenine. Accepts a variety of oxo-acids as amino-group acceptors, with a preference for 2-oxoglutarate, 2-oxocaproic acid, phenylpyruvate and alpha-oxo-gamma-methiol butyric acid. Can also use glyoxylate as amino-group acceptor (in vitro). The chain is Kynurenine/alpha-aminoadipate aminotransferase, mitochondrial from Bos taurus (Bovine).